Reading from the N-terminus, the 81-residue chain is Sulfur carrier protein TusA (81 aa).

Catalysis depends on C19, which acts as the Cysteine persulfide intermediate.

Belongs to the sulfur carrier protein TusA family. In terms of assembly, interacts with IscS.

Its subcellular location is the cytoplasm. It functions in the pathway tRNA modification. Its function is as follows. Sulfur carrier protein involved in sulfur trafficking in the cell. Part of a sulfur-relay system required for 2-thiolation during synthesis of 2-thiouridine of the modified wobble base 5-methylaminomethyl-2-thiouridine (mnm(5)s(2)U) in tRNA. Interacts with IscS and stimulates its cysteine desulfurase activity. Accepts an activated sulfur from IscS, which is then transferred to TusD, and thus determines the direction of sulfur flow from IscS to 2-thiouridine formation. Also appears to be involved in sulfur transfer for the biosynthesis of molybdopterin. The protein is Sulfur carrier protein TusA of Erwinia tasmaniensis (strain DSM 17950 / CFBP 7177 / CIP 109463 / NCPPB 4357 / Et1/99).